The following is a 203-amino-acid chain: ATP-dependent Clp protease proteolytic subunit (203 aa).

Residue S107 is the Nucleophile of the active site. The active site involves H132.

It belongs to the peptidase S14 family. In terms of assembly, fourteen ClpP subunits assemble into 2 heptameric rings which stack back to back to give a disk-like structure with a central cavity, resembling the structure of eukaryotic proteasomes.

The protein resides in the cytoplasm. It catalyses the reaction Hydrolysis of proteins to small peptides in the presence of ATP and magnesium. alpha-casein is the usual test substrate. In the absence of ATP, only oligopeptides shorter than five residues are hydrolyzed (such as succinyl-Leu-Tyr-|-NHMec, and Leu-Tyr-Leu-|-Tyr-Trp, in which cleavage of the -Tyr-|-Leu- and -Tyr-|-Trp bonds also occurs).. In terms of biological role, cleaves peptides in various proteins in a process that requires ATP hydrolysis. Has a chymotrypsin-like activity. Plays a major role in the degradation of misfolded proteins. The chain is ATP-dependent Clp protease proteolytic subunit from Thermotoga maritima (strain ATCC 43589 / DSM 3109 / JCM 10099 / NBRC 100826 / MSB8).